A 93-amino-acid polypeptide reads, in one-letter code: Alpha-defensin 15 (93 aa).

The N-terminal stretch at 1–19 (MKTLVLLSALVLLAFQVQA) is a signal peptide. A propeptide spanning residues 20 to 58 (DPIQNTDEETKTEEQPGEDDQAVSVSFGDPEGSSLQEES) is cleaved from the precursor. The segment at 23 to 56 (QNTDEETKTEEQPGEDDQAVSVSFGDPEGSSLQE) is disordered. Disulfide bonds link Cys64–Cys92, Cys66–Cys81, and Cys71–Cys91.

It belongs to the alpha-defensin family. In terms of tissue distribution, paneth cells of the small bowel.

It is found in the secreted. In terms of biological role, probably contributes to the antimicrobial barrier function of the small bowel mucosa. This is Alpha-defensin 15 (Defa15) from Mus musculus (Mouse).